The following is a 115-amino-acid chain: uncharacterized protein (115 aa).

Positions 90-100 (THFGRPATRRR) are enriched in basic residues. The disordered stretch occupies residues 90–115 (THFGRPATRRRPLGEREVNPSARSLG).

This is an uncharacterized protein from Saccharomyces cerevisiae (strain ATCC 204508 / S288c) (Baker's yeast).